We begin with the raw amino-acid sequence, 216 residues long: FMN-dependent NADH:quinone oxidoreductase 2 (216 aa).

Residues S9, 15 to 17 (SVS), 96 to 99 (MYNF), and 140 to 143 (SRGG) contribute to the FMN site.

Belongs to the azoreductase type 1 family. In terms of assembly, homodimer. FMN is required as a cofactor.

It catalyses the reaction 2 a quinone + NADH + H(+) = 2 a 1,4-benzosemiquinone + NAD(+). The enzyme catalyses N,N-dimethyl-1,4-phenylenediamine + anthranilate + 2 NAD(+) = 2-(4-dimethylaminophenyl)diazenylbenzoate + 2 NADH + 2 H(+). In terms of biological role, quinone reductase that provides resistance to thiol-specific stress caused by electrophilic quinones. Functionally, also exhibits azoreductase activity. Catalyzes the reductive cleavage of the azo bond in aromatic azo compounds to the corresponding amines. The chain is FMN-dependent NADH:quinone oxidoreductase 2 from Xanthomonas euvesicatoria pv. vesicatoria (strain 85-10) (Xanthomonas campestris pv. vesicatoria).